We begin with the raw amino-acid sequence, 792 residues long: LPS-assembly protein LptD (792 aa).

The first 22 residues, 1 to 22 (MYRVLRLLPLPLSVAISLSALA), serve as a signal peptide directing secretion.

This sequence belongs to the LptD family. In terms of assembly, component of the lipopolysaccharide transport and assembly complex. Interacts with LptE and LptA.

Its subcellular location is the cell outer membrane. Functionally, together with LptE, is involved in the assembly of lipopolysaccharide (LPS) at the surface of the outer membrane. In Xylella fastidiosa (strain 9a5c), this protein is LPS-assembly protein LptD.